We begin with the raw amino-acid sequence, 420 residues long: Acetyl-CoA acetyltransferase B, mitochondrial (420 aa).

The transit peptide at 1–33 (MAFCGPRTAARLSHSTRALHYTHRSFASPRTLN) directs the protein to the mitochondrion. Catalysis depends on cysteine 119, which acts as the Acyl-thioester intermediate. CoA-binding positions include tyrosine 212, 251-253 (RVD), and lysine 256. Tyrosine 212 is a K(+) binding site. K(+)-binding residues include alanine 273 and alanine 274. Residue serine 277 coordinates CoA. Residue valine 374 participates in K(+) binding. The active-site Proton donor/acceptor is the cysteine 406.

This sequence belongs to the thiolase-like superfamily. Thiolase family. As to quaternary structure, homotetramer.

It is found in the mitochondrion. The enzyme catalyses 2 acetyl-CoA = acetoacetyl-CoA + CoA. The catalysed reaction is propanoyl-CoA + acetyl-CoA = 2-methyl-3-oxobutanoyl-CoA + CoA. It functions in the pathway lipid metabolism; fatty acid beta-oxidation. In terms of biological role, this is one of the enzymes that catalyzes the last step of the mitochondrial beta-oxidation pathway, an aerobic process breaking down fatty acids into acetyl-CoA. Using free coenzyme A/CoA, catalyzes the thiolytic cleavage of medium- to long-chain 3-oxoacyl-CoAs into acetyl-CoA and a fatty acyl-CoA shortened by two carbon atoms. The activity of the enzyme is reversible and it can also catalyze the condensation of two acetyl-CoA molecules into acetoacetyl-CoA. Thereby, it plays a major role in ketone body metabolism. This chain is Acetyl-CoA acetyltransferase B, mitochondrial (acat1-b), found in Xenopus laevis (African clawed frog).